A 514-amino-acid polypeptide reads, in one-letter code: Nucleus accumbens-associated protein 1 (514 aa).

Positions 30-94 constitute a BTB domain; that stretch reads CDVSVVVKGH…CYTGRLSMNM (65 aa). A Glycyl lysine isopeptide (Lys-Gly) (interchain with G-Cter in SUMO1); alternate cross-link involves residue lysine 167. Lysine 167 is covalently cross-linked (Glycyl lysine isopeptide (Lys-Gly) (interchain with G-Cter in SUMO2); alternate). Residue lysine 182 forms a Glycyl lysine isopeptide (Lys-Gly) (interchain with G-Cter in SUMO2) linkage. Disordered stretches follow at residues 183 to 218 and 241 to 279; these read RLWD…NRMP and GPSM…EEGT. Serine 187 is subject to Phosphoserine. The span at 242-251 shows a compositional bias: polar residues; that stretch reads PSMSERTSPG. Residue serine 245 is modified to Phosphoserine; by PKC. The segment covering 252-264 has biased composition (low complexity); the sequence is TSSAYTSDSPSSY. Positions 267-279 are enriched in acidic residues; that stretch reads EEDEEEDAGEEGT. Glycyl lysine isopeptide (Lys-Gly) (interchain with G-Cter in SUMO2) cross-links involve residues lysine 304, lysine 438, lysine 466, and lysine 485. Residues 360-457 enclose the BEN domain; that stretch reads GTNVYITRAQ…DMCTNARRVV (98 aa). A phosphoserine mark is found at serine 492 and serine 496.

As to quaternary structure, homooligomer; mediated by the BTB domain. Both isoforms interact with HDAC3 and HDAC4. Interacts (via BTB domain) with CUL3, PSMD7 and RCOR1. Post-translationally, phosphorylated by protein kinase C (PKC). Highly expressed in the hippocampus, brain cortex, cerebellum and brainstem. Expressed in the nucleus accumbens, olfactory tubercle, the striatum, frontal and parietal cortex and ventral pallidum. Weakly expressed in the heart, liver, kidney, spleen, testis, and skeletal muscle. Isoform 2 is expressed in the brain and liver, less abundantly expressed in the brain than isoform 1.

Its subcellular location is the nucleus. It localises to the cytoplasm. In terms of biological role, functions as a transcriptional repressor. Isoform 1 is a stronger transcriptional repressor than isoform 2. Seems to function as a transcriptional corepressor in neuronal cells through recruitment of HDAC3 and HDAC4. Contributes to tumor progression, and tumor cell proliferation and survival. This may be mediated at least in part through repressing transcriptional activity of GADD45GIP1. Required for recruiting the proteasome from the nucleus to the cytoplasm and dendritic spines. The polypeptide is Nucleus accumbens-associated protein 1 (Nacc1) (Rattus norvegicus (Rat)).